Here is a 328-residue protein sequence, read N- to C-terminus: MVSVQNLKTDQLLNFLFKNPTKFLSRFSPMAKNKTLVTPSTVKKSSDVASTSKKLSGVASPAKKPSGVTSPVKKPLEAVASTSSEEEEEDEPSSDSESGSESESDTEAEPMTLAAAAPSSSNEKRQSEGKPEEERAKTETETGKKPLLFQRLWTDEDEIVFLQGMIKFAKDTGKNVSEDMNGFFEKLKDSISFEVKTDQFVNKIRSMKRKYIENKKTTTEHDKKCYELAEIIWVSDGDATALVKPKKKKLKVDEESDWFERSFVDGAFKELGPGVDEETWKKNWSLVPVKKRKRIEEKVKSMQADELKTTWQKIDVVHEMRSLMAKYV.

The interval 31–143 (AKNKTLVTPS…ERAKTETETG (113 aa)) is disordered. A compositionally biased stretch (polar residues) spans 35-54 (TLVTPSTVKKSSDVASTSKK). The span at 84-108 (SEEEEEDEPSSDSESGSESESDTEA) shows a compositional bias: acidic residues. Over residues 122 to 143 (NEKRQSEGKPEEERAKTETETG) the composition is skewed to basic and acidic residues.

Belongs to the GeBP family.

This Arabidopsis thaliana (Mouse-ear cress) protein is Probable transcription factor At4g00610.